A 79-amino-acid polypeptide reads, in one-letter code: Cell division protein ZapB (79 aa).

A coiled-coil region spans residues 6–78 (FEKLEVKVQQ…LRALLGKMEE (73 aa)).

Belongs to the ZapB family. Homodimer. The ends of the coiled-coil dimer bind to each other, forming polymers. Interacts with FtsZ.

The protein resides in the cytoplasm. Non-essential, abundant cell division factor that is required for proper Z-ring formation. It is recruited early to the divisome by direct interaction with FtsZ, stimulating Z-ring assembly and thereby promoting cell division earlier in the cell cycle. Its recruitment to the Z-ring requires functional FtsA or ZipA. The sequence is that of Cell division protein ZapB from Yersinia enterocolitica serotype O:8 / biotype 1B (strain NCTC 13174 / 8081).